The chain runs to 75 residues: Acyl carrier protein (75 aa).

The region spanning 1 to 75 (MSVFDKVKSI…DAVNYIKENQ (75 aa)) is the Carrier domain. Ser35 carries the post-translational modification O-(pantetheine 4'-phosphoryl)serine.

It belongs to the acyl carrier protein (ACP) family. In terms of processing, 4'-phosphopantetheine is transferred from CoA to a specific serine of apo-ACP by AcpS. This modification is essential for activity because fatty acids are bound in thioester linkage to the sulfhydryl of the prosthetic group.

It localises to the cytoplasm. It functions in the pathway lipid metabolism; fatty acid biosynthesis. Carrier of the growing fatty acid chain in fatty acid biosynthesis. In Desulfitobacterium hafniense (strain Y51), this protein is Acyl carrier protein.